We begin with the raw amino-acid sequence, 385 residues long: Probable thioesterase PNKD (385 aa).

Residues 32–58 are disordered; the sequence is KASHNRTRALQSHSSPEGKEEPEPLSP. Positions 172, 174, 176, 177, 229, 253, and 291 each coordinate Zn(2+).

Belongs to the metallo-beta-lactamase superfamily. Glyoxalase II family. Isoform 2 interacts with the sarcomeric proteins, MRLC2, MYOM1 and ENO3. Zn(2+) serves as cofactor. Post-translationally, undergoes cleavage at the N-terminus. As to expression, isoform 1 is only expressed in the brain. Isoform 2 is ubiquitously detected with highest expression in skeletal muscle and detected in myocardial myofibrils.

Its subcellular location is the cell membrane. It localises to the mitochondrion. The protein resides in the cytoplasm. The protein localises to the golgi apparatus. It is found in the endoplasmic reticulum. It carries out the reaction a thioester + H2O = a thiol + a carboxylate + H(+). Its function is as follows. Probable thioesterase that may play a role in cellular detoxification processes; it likely acts on a yet-unknown alpha-hydroxythioester substrate. In vitro, it is able to catalyze the hydrolysis of S-D-lactoyl-glutathione to form glutathione and D-lactic acid at very low rate, though this reaction is not physiologically relevant in vivo. The chain is Probable thioesterase PNKD (PNKD) from Homo sapiens (Human).